Consider the following 275-residue polypeptide: Large ribosomal subunit protein uL2 (275 aa).

A disordered region spans residues valine 223–lysine 275. Positions aspartate 229–glutamate 244 are enriched in basic and acidic residues.

The protein belongs to the universal ribosomal protein uL2 family. Part of the 50S ribosomal subunit. Forms a bridge to the 30S subunit in the 70S ribosome.

In terms of biological role, one of the primary rRNA binding proteins. Required for association of the 30S and 50S subunits to form the 70S ribosome, for tRNA binding and peptide bond formation. It has been suggested to have peptidyltransferase activity; this is somewhat controversial. Makes several contacts with the 16S rRNA in the 70S ribosome. The protein is Large ribosomal subunit protein uL2 of Bordetella petrii (strain ATCC BAA-461 / DSM 12804 / CCUG 43448).